The sequence spans 349 residues: N-acetyltaurine hydrolase (349 aa).

Residues His26, His28, Glu169, His201, His230, and Asp298 each coordinate a divalent metal cation.

This sequence belongs to the metallo-dependent hydrolases superfamily. Phosphotriesterase family. Requires a divalent metal cation as cofactor. In terms of tissue distribution, expressed in the kidney, liver and brainstem.

The protein resides in the cytoplasm. It is found in the cytosol. It carries out the reaction N-acetyltaurine + H2O = taurine + acetate. The enzyme catalyses N-propanoyltaurine + H2O = propanoate + taurine. It catalyses the reaction N-acetyl-L-methionine + H2O = L-methionine + acetate. The catalysed reaction is N-acetyl-L-isoleucine + H2O = L-isoleucine + acetate. It carries out the reaction N-acetyl-L-leucine + H2O = L-leucine + acetate. The enzyme catalyses N-acetyl-L-valine + H2O = L-valine + acetate. Its function is as follows. N-acetyltaurine hydrolase that regulates feeding by catalyzing the hydrolysis of N-acetyltaurine into taurine and acetate. N-acetyltaurine has anorexigenic and anti-obesity effects that are dependent on GFRAL receptor and GDF15. PTER also acts on other N-acetyl amino acids (Met, Ile, Leu, Val) and N-propionyltaurine, but at lower rates. In Mus musculus (Mouse), this protein is N-acetyltaurine hydrolase.